A 272-amino-acid chain; its full sequence is Rhomboid-type serine protease B (272 aa).

A run of 6 helical transmembrane segments spans residues 30 to 50, 72 to 92, 103 to 123, 133 to 153, 164 to 184, and 186 to 206; these read LVLL…WSVV, PFIH…TPLL, TAVA…YILV, AVVG…IKTF, TKIP…IFVP, and TSFL…LGYL. Serine 138 acts as the Nucleophile in catalysis. Histidine 191 is a catalytic residue.

It belongs to the peptidase S54 family.

Its subcellular location is the membrane. The catalysed reaction is Cleaves type-1 transmembrane domains using a catalytic dyad composed of serine and histidine that are contributed by different transmembrane domains.. In terms of biological role, rhomboid protease that catalyzes intramembrane proteolysis. Required for transcription factor srbA activation by mediating its release from the membrane and thereby regulating its activity under hypoxic conditions. Essential for iron homeostasis and resistance to azoles such as voriconazole. Required for virulence in murine models of invasive pulmonary aspergillosis (IPA). The chain is Rhomboid-type serine protease B from Aspergillus fumigatus (strain ATCC MYA-4609 / CBS 101355 / FGSC A1100 / Af293) (Neosartorya fumigata).